The primary structure comprises 149 residues: Protein K7 (149 aa).

It belongs to the orthopoxvirus OPG044 family. As to quaternary structure, interacts with DDX3; this interaction inhibits DDX3 and suppresses DDX3-mediated IFN-beta promoter induction. Interacts with TRAF6 and IRAK2; these interactions suppress TLR-dependent NF-KappaB activation.

The protein resides in the host cytoplasm. Functionally, virulence factor that affects the acute immune response to infection. Bcl-2-like protein which, through its interaction with the DEAD box RNA helicase DDX3X/DDX3, prevents TBK1/IKKepsilon-mediated IRF3 activation. Contributes to virulence by binding to the host TRAF6 and IRAK2 and preventing host NF-kappa-B activation. In Cynomys gunnisoni (Gunnison's prairie dog), this protein is Protein K7 (OPG044).